Reading from the N-terminus, the 250-residue chain is DNA repair protein RecO (250 aa).

The protein belongs to the RecO family.

Involved in DNA repair and RecF pathway recombination. In Staphylococcus haemolyticus (strain JCSC1435), this protein is DNA repair protein RecO.